A 415-amino-acid chain; its full sequence is Methylthioribose-1-phosphate isomerase (415 aa).

The active-site Proton donor is the Asp284.

This sequence belongs to the eIF-2B alpha/beta/delta subunits family. MtnA subfamily.

The protein localises to the cytoplasm. The protein resides in the nucleus. The enzyme catalyses 5-(methylsulfanyl)-alpha-D-ribose 1-phosphate = 5-(methylsulfanyl)-D-ribulose 1-phosphate. Its pathway is amino-acid biosynthesis; L-methionine biosynthesis via salvage pathway; L-methionine from S-methyl-5-thio-alpha-D-ribose 1-phosphate: step 1/6. Its function is as follows. Catalyzes the interconversion of methylthioribose-1-phosphate (MTR-1-P) into methylthioribulose-1-phosphate (MTRu-1-P). This is Methylthioribose-1-phosphate isomerase from Candida glabrata (strain ATCC 2001 / BCRC 20586 / JCM 3761 / NBRC 0622 / NRRL Y-65 / CBS 138) (Yeast).